The sequence spans 388 residues: Chorismate synthase (388 aa).

Arg-39 and Arg-45 together coordinate NADP(+). FMN is bound by residues 130 to 132 (RSS), 251 to 252 (NA), Gly-296, 311 to 315 (KPIPT), and Arg-337.

Belongs to the chorismate synthase family. In terms of assembly, homotetramer. It depends on FMNH2 as a cofactor.

It carries out the reaction 5-O-(1-carboxyvinyl)-3-phosphoshikimate = chorismate + phosphate. Its pathway is metabolic intermediate biosynthesis; chorismate biosynthesis; chorismate from D-erythrose 4-phosphate and phosphoenolpyruvate: step 7/7. Its function is as follows. Catalyzes the anti-1,4-elimination of the C-3 phosphate and the C-6 proR hydrogen from 5-enolpyruvylshikimate-3-phosphate (EPSP) to yield chorismate, which is the branch point compound that serves as the starting substrate for the three terminal pathways of aromatic amino acid biosynthesis. This reaction introduces a second double bond into the aromatic ring system. The chain is Chorismate synthase from Streptococcus pyogenes serotype M5 (strain Manfredo).